We begin with the raw amino-acid sequence, 191 residues long: Small ribosomal subunit protein uS7 (191 aa).

The disordered stretch occupies residues 56-80 (NKSGEQGDGDGEGGGKAGGIKKRSL).

The protein belongs to the universal ribosomal protein uS7 family. Part of the 30S ribosomal subunit. Contacts proteins S9 and S11.

One of the primary rRNA binding proteins, it binds directly to 16S rRNA where it nucleates assembly of the head domain of the 30S subunit. Is located at the subunit interface close to the decoding center, probably blocks exit of the E-site tRNA. In Coxiella burnetii (strain CbuG_Q212) (Coxiella burnetii (strain Q212)), this protein is Small ribosomal subunit protein uS7.